The sequence spans 158 residues: uncharacterized protein (158 aa).

This is an uncharacterized protein from Saccharolobus islandicus (Sulfolobus islandicus).